Here is a 206-residue protein sequence, read N- to C-terminus: Protein GET1 (206 aa).

Residues 1–4 (MPSL) are Lumenal-facing. A helical membrane pass occupies residues 5–24 (LITALFLNVIIYVINTVGAA). Residues 25–110 (TVDGLLWLLY…TFDITIKIAR (86 aa)) lie on the Cytoplasmic side of the membrane. Residues 75 to 100 (AKLRRRHDKALEAYEAKNNELTQSKS) are a coiled coil. Residues 111 to 131 (WAATSGLMLFLQFWYSKTPIF) traverse the membrane as a helical segment. Over 132 to 155 (TLPPGWIPWQVQWVLSFPRAPMGT) the chain is Lumenal. Residues 156–172 (VSIQIWSGACATVVALV) form a helical membrane-spanning segment. The Cytoplasmic segment spans residues 173–206 (GDAMKASLAYVSKPKIDRIKLGATMEGKEGKKRQ).

Belongs to the WRB/GET1 family. As to quaternary structure, interacts with GET3.

It localises to the endoplasmic reticulum membrane. Functionally, required for the post-translational delivery of tail-anchored (TA) proteins to the endoplasmic reticulum. Acts as a membrane receptor for soluble GET3, which recognizes and selectively binds the transmembrane domain of TA proteins in the cytosol. The polypeptide is Protein GET1 (Ajellomyces capsulatus (strain H143) (Darling's disease fungus)).